The chain runs to 151 residues: Prefoldin subunit alpha (151 aa).

A disordered region spans residues 120 to 151; that stretch reads TVEEETASLEEKAQQAQQQQMQQLQQMQQEDE. A compositionally biased stretch (low complexity) spans 133 to 151; that stretch reads QQAQQQQMQQLQQMQQEDE.

This sequence belongs to the prefoldin subunit alpha family. Heterohexamer of two alpha and four beta subunits.

Its subcellular location is the cytoplasm. In terms of biological role, molecular chaperone capable of stabilizing a range of proteins. Seems to fulfill an ATP-independent, HSP70-like function in archaeal de novo protein folding. This is Prefoldin subunit alpha from Natronomonas pharaonis (strain ATCC 35678 / DSM 2160 / CIP 103997 / JCM 8858 / NBRC 14720 / NCIMB 2260 / Gabara) (Halobacterium pharaonis).